The following is a 255-amino-acid chain: Small ribosomal subunit protein uS2 (255 aa).

The disordered stretch occupies residues 230-255; it reads QSSSGRDLGASSEVPVEPALEEAAEG.

The protein belongs to the universal ribosomal protein uS2 family.

This is Small ribosomal subunit protein uS2 from Rhizobium etli (strain CIAT 652).